The primary structure comprises 212 residues: ATP-dependent Clp protease proteolytic subunit (212 aa).

Residue Ser-114 is the Nucleophile of the active site. The active site involves His-139.

The protein belongs to the peptidase S14 family. Fourteen ClpP subunits assemble into 2 heptameric rings which stack back to back to give a disk-like structure with a central cavity, resembling the structure of eukaryotic proteasomes.

It is found in the cytoplasm. The catalysed reaction is Hydrolysis of proteins to small peptides in the presence of ATP and magnesium. alpha-casein is the usual test substrate. In the absence of ATP, only oligopeptides shorter than five residues are hydrolyzed (such as succinyl-Leu-Tyr-|-NHMec, and Leu-Tyr-Leu-|-Tyr-Trp, in which cleavage of the -Tyr-|-Leu- and -Tyr-|-Trp bonds also occurs).. Its function is as follows. Cleaves peptides in various proteins in a process that requires ATP hydrolysis. Has a chymotrypsin-like activity. Plays a major role in the degradation of misfolded proteins. The protein is ATP-dependent Clp protease proteolytic subunit of Aromatoleum aromaticum (strain DSM 19018 / LMG 30748 / EbN1) (Azoarcus sp. (strain EbN1)).